The primary structure comprises 537 residues: CTP synthase (537 aa).

The segment at 1-268 (MPFKCIFLTG…ANFIGEKLKL (268 aa)) is amidoligase domain. Ser14 contributes to the CTP binding site. Ser14 is a binding site for UTP. ATP contacts are provided by residues 15–20 (SLGKGL) and Asp72. Mg(2+) is bound by residues Asp72 and Glu142. Residues 149 to 151 (DIE), 188 to 193 (KSKPTQ), and Lys224 each bind CTP. UTP is bound by residues 188–193 (KSKPTQ) and Lys224. One can recognise a Glutamine amidotransferase type-1 domain in the interval 293 to 533 (KIGVVGKYVQ…IEAALVYSKD (241 aa)). L-glutamine is bound at residue Gly352. The active-site Nucleophile; for glutamine hydrolysis is Cys379. L-glutamine is bound by residues 380–383 (LGMQ), Glu403, and Arg461. Residues His506 and Glu508 contribute to the active site.

Belongs to the CTP synthase family. In terms of assembly, homotetramer.

The enzyme catalyses UTP + L-glutamine + ATP + H2O = CTP + L-glutamate + ADP + phosphate + 2 H(+). The catalysed reaction is L-glutamine + H2O = L-glutamate + NH4(+). It catalyses the reaction UTP + NH4(+) + ATP = CTP + ADP + phosphate + 2 H(+). It functions in the pathway pyrimidine metabolism; CTP biosynthesis via de novo pathway; CTP from UDP: step 2/2. With respect to regulation, allosterically activated by GTP, when glutamine is the substrate; GTP has no effect on the reaction when ammonia is the substrate. The allosteric effector GTP functions by stabilizing the protein conformation that binds the tetrahedral intermediate(s) formed during glutamine hydrolysis. Inhibited by the product CTP, via allosteric rather than competitive inhibition. Its function is as follows. Catalyzes the ATP-dependent amination of UTP to CTP with either L-glutamine or ammonia as the source of nitrogen. Regulates intracellular CTP levels through interactions with the four ribonucleotide triphosphates. The polypeptide is CTP synthase (Chlamydia pneumoniae (Chlamydophila pneumoniae)).